Consider the following 203-residue polypeptide: Small ribosomal subunit protein uS4 (203 aa).

Residues 93–153 (RRFDNVVFRA…PKSKNMSAVS (61 aa)) form the S4 RNA-binding domain.

It belongs to the universal ribosomal protein uS4 family. As to quaternary structure, part of the 30S ribosomal subunit. Contacts protein S5. The interaction surface between S4 and S5 is involved in control of translational fidelity.

Functionally, one of the primary rRNA binding proteins, it binds directly to 16S rRNA where it nucleates assembly of the body of the 30S subunit. In terms of biological role, with S5 and S12 plays an important role in translational accuracy. This is Small ribosomal subunit protein uS4 from Chlorobium phaeovibrioides (strain DSM 265 / 1930) (Prosthecochloris vibrioformis (strain DSM 265)).